We begin with the raw amino-acid sequence, 227 residues long: ATP synthase subunit a (227 aa).

A run of 6 helical transmembrane segments spans residues 14 to 34 (LLNI…FVSF), 69 to 89 (WVVL…IGLF), 98 to 118 (QLSM…VYGF), 137 to 157 (LLVP…PLAL), 169 to 189 (HLLM…SVML), and 205 to 223 (IAVA…TLYL).

The protein belongs to the ATPase A chain family. In terms of assembly, F-type ATPases have 2 components, CF(1) - the catalytic core - and CF(0) - the membrane proton channel. CF(1) has five subunits: alpha(3), beta(3), gamma(1), delta(1), epsilon(1). CF(0) has three main subunits: a, b and c.

The protein resides in the mitochondrion inner membrane. Mitochondrial membrane ATP synthase (F(1)F(0) ATP synthase or Complex V) produces ATP from ADP in the presence of a proton gradient across the membrane which is generated by electron transport complexes of the respiratory chain. F-type ATPases consist of two structural domains, F(1) - containing the extramembraneous catalytic core and F(0) - containing the membrane proton channel, linked together by a central stalk and a peripheral stalk. During catalysis, ATP synthesis in the catalytic domain of F(1) is coupled via a rotary mechanism of the central stalk subunits to proton translocation. Key component of the proton channel; it may play a direct role in the translocation of protons across the membrane. The polypeptide is ATP synthase subunit a (ATP6) (Branchiostoma floridae (Florida lancelet)).